The chain runs to 429 residues: MSTQHDEHDAAGATGVADQVVAAAERARAASHGLALATRAEKDAALQAMAEALLTREPEVLAANGEDVARAEANGTPPNIVDRLRLTQERVAAMAQGLRDVAALPDPVGEVLRGSTLANGLEMRQVRVPFGVVGMIYEARPNVTADAAGICLKSGNAVLLRGSSSARSSNAAIVAALRDAIAGTGLDPDVVQQVPGDSHDSVKALMRARGHVDVLIPRGGAGLIRSVVEESTVPVIETGVGNCHVYVDRAADLDKALAIVLNAKTHRTSVCNAAESLLVHADLADTFVPRVVAALQEAGVTVHGDERFQAEDGVLPATDEDYGQEYLSLDISAAVVPDLDGAIAHIRRWSSQHTEAIVTEDLAAARRFTAAVDSAAVLVNASTRFTDGGEFGFGAEIGISTQKLHARGPMGLTEMTSTKYVVTGDGHVR.

The protein belongs to the gamma-glutamyl phosphate reductase family.

Its subcellular location is the cytoplasm. The catalysed reaction is L-glutamate 5-semialdehyde + phosphate + NADP(+) = L-glutamyl 5-phosphate + NADPH + H(+). The protein operates within amino-acid biosynthesis; L-proline biosynthesis; L-glutamate 5-semialdehyde from L-glutamate: step 2/2. Functionally, catalyzes the NADPH-dependent reduction of L-glutamate 5-phosphate into L-glutamate 5-semialdehyde and phosphate. The product spontaneously undergoes cyclization to form 1-pyrroline-5-carboxylate. The protein is Gamma-glutamyl phosphate reductase of Nocardioides sp. (strain ATCC BAA-499 / JS614).